A 248-amino-acid polypeptide reads, in one-letter code: Isoprenyl transferase (248 aa).

Aspartate 23 is a catalytic residue. Position 23 (aspartate 23) interacts with Mg(2+). Residues 24–27 (GNGR), tryptophan 28, arginine 36, histidine 40, and 68–70 (STE) each bind substrate. Asparagine 71 serves as the catalytic Proton acceptor. Residues tryptophan 72, arginine 74, arginine 185, and 191–193 (RIS) each bind substrate. Glutamate 204 is a Mg(2+) binding site.

This sequence belongs to the UPP synthase family. As to quaternary structure, homodimer. It depends on Mg(2+) as a cofactor.

Functionally, catalyzes the condensation of isopentenyl diphosphate (IPP) with allylic pyrophosphates generating different type of terpenoids. The polypeptide is Isoprenyl transferase (Neisseria meningitidis serogroup B (strain ATCC BAA-335 / MC58)).